Here is a 102-residue protein sequence, read N- to C-terminus: Carboxysome shell protein CcmK3 (102 aa).

The BMC domain maps to 4–90 (AVGVIQTDGF…PPDNVETVMP (87 aa)).

The protein belongs to the bacterial microcompartments protein family. CcmK subfamily. Interacts stably with CcmK4, forming heterohexamers that can make dodecamers. Heterohexamers have a 1:2 CcmK3:CcmK4 stoichiometry. Upon expression in E.coli forms oligomers that could be dimers or trimers, but never hexamers; bulky residues in the pore region probably preclude the formation of homohexamers.

The protein localises to the carboxysome. Its function is as follows. A probably non-essential, minor shell protein of the carboxysome, a polyhedral inclusion where RuBisCO (ribulose bisphosphate carboxylase, rbcL-rbcS) is sequestered. Hexamers form sheets that form the facets of the polyhedral carboxysome. In PCC 7418 there are several CcmK paralogs with presumably functional differences. This subunit probably only makes heterohexamers with CcmK4. Heterohexamers can also make dodecamers, formation depends on buffer conditions. In Halothece sp. (strain PCC 7418) (Synechococcus sp. (strain PCC 7418)), this protein is Carboxysome shell protein CcmK3.